Here is a 173-residue protein sequence, read N- to C-terminus: Regulatory protein RecX (173 aa).

The protein belongs to the RecX family.

The protein resides in the cytoplasm. Functionally, modulates RecA activity. The protein is Regulatory protein RecX of Mycobacterium marinum (strain ATCC BAA-535 / M).